A 185-amino-acid polypeptide reads, in one-letter code: Ribosomal RNA small subunit methyltransferase G (185 aa).

S-adenosyl-L-methionine contacts are provided by residues glycine 59, phenylalanine 64, isoleucine 110–glutamine 111, and arginine 127.

The protein belongs to the methyltransferase superfamily. RNA methyltransferase RsmG family.

Its subcellular location is the cytoplasm. The enzyme catalyses guanosine(527) in 16S rRNA + S-adenosyl-L-methionine = N(7)-methylguanosine(527) in 16S rRNA + S-adenosyl-L-homocysteine. Specifically methylates the N7 position of guanine in position 527 of 16S rRNA. The sequence is that of Ribosomal RNA small subunit methyltransferase G from Helicobacter hepaticus (strain ATCC 51449 / 3B1).